The primary structure comprises 795 residues: Delta-1-pyrroline-5-carboxylate synthase (795 aa).

The glutamate 5-kinase stretch occupies residues 1–361 (MLSQVYRYGF…FFSEVKPAGP (361 aa)). Residues Ser-117, Asp-223, and Asn-246 each contribute to the substrate site. Residues 266-267 (SD) and 305-311 (MGGMEAK) contribute to the ATP site. Residues Lys-311, Lys-347, and Lys-550 each carry the N6-succinyllysine modification. Residues 362-795 (TVEQQGEMAR…NLPIPQRNTN (434 aa)) are gamma-glutamyl phosphate reductase.

The protein in the N-terminal section; belongs to the glutamate 5-kinase family. In the C-terminal section; belongs to the gamma-glutamyl phosphate reductase family. In terms of assembly, can form homodimers/multimers.

The protein localises to the mitochondrion matrix. The catalysed reaction is L-glutamate + ATP = L-glutamyl 5-phosphate + ADP. It catalyses the reaction L-glutamate 5-semialdehyde + phosphate + NADP(+) = L-glutamyl 5-phosphate + NADPH + H(+). The protein operates within amino-acid biosynthesis; L-proline biosynthesis; L-glutamate 5-semialdehyde from L-glutamate: step 1/2. Its pathway is amino-acid biosynthesis; L-proline biosynthesis; L-glutamate 5-semialdehyde from L-glutamate: step 2/2. Functionally, bifunctional enzyme that converts glutamate to glutamate 5-semialdehyde, an intermediate in the biosynthesis of proline, ornithine and arginine. This chain is Delta-1-pyrroline-5-carboxylate synthase (ALDH18A1), found in Pongo abelii (Sumatran orangutan).